We begin with the raw amino-acid sequence, 242 residues long: Uridylate kinase (242 aa).

16–19 lines the ATP pocket; it reads KVSG. Gly-58 serves as a coordination point for UMP. Gly-59 and Arg-63 together coordinate ATP. UMP is bound by residues Asp-78 and 139–146; that span reads TGNPFCTT. ATP contacts are provided by Thr-166, Gln-167, Tyr-172, and Asp-175.

The protein belongs to the UMP kinase family. In terms of assembly, homohexamer.

It localises to the cytoplasm. It carries out the reaction UMP + ATP = UDP + ADP. It functions in the pathway pyrimidine metabolism; CTP biosynthesis via de novo pathway; UDP from UMP (UMPK route): step 1/1. Its activity is regulated as follows. Inhibited by UTP. Functionally, catalyzes the reversible phosphorylation of UMP to UDP. This Rickettsia massiliae (strain Mtu5) protein is Uridylate kinase.